The sequence spans 143 residues: Transmembrane protein 80 (143 aa).

The next 4 helical transmembrane spans lie at 22–42, 47–67, 88–108, and 122–142; these read LLCL…LLLV, VFTY…LMGI, LAAS…FLLW, and PLLA…AAFV.

It localises to the membrane. The protein resides in the cell projection. Its subcellular location is the cilium. The sequence is that of Transmembrane protein 80 (TMEM80) from Bos taurus (Bovine).